Consider the following 498-residue polypeptide: Glutamate--tRNA ligase (498 aa).

The 'HIGH' region motif lies at 11 to 21; the sequence is PSPTGHLHIGN. The short motif at 261 to 265 is the 'KMSKS' region element; that stretch reads KLSKR. An ATP-binding site is contributed by lysine 264.

This sequence belongs to the class-I aminoacyl-tRNA synthetase family. Glutamate--tRNA ligase type 1 subfamily. As to quaternary structure, monomer.

The protein localises to the cytoplasm. It carries out the reaction tRNA(Glu) + L-glutamate + ATP = L-glutamyl-tRNA(Glu) + AMP + diphosphate. In terms of biological role, catalyzes the attachment of glutamate to tRNA(Glu) in a two-step reaction: glutamate is first activated by ATP to form Glu-AMP and then transferred to the acceptor end of tRNA(Glu). The chain is Glutamate--tRNA ligase from Oenococcus oeni (strain ATCC BAA-331 / PSU-1).